The sequence spans 145 residues: D-aminoacyl-tRNA deacylase (145 aa).

Residues 137–138 (GP) carry the Gly-cisPro motif, important for rejection of L-amino acids motif.

It belongs to the DTD family. Homodimer.

It is found in the cytoplasm. It catalyses the reaction glycyl-tRNA(Ala) + H2O = tRNA(Ala) + glycine + H(+). The catalysed reaction is a D-aminoacyl-tRNA + H2O = a tRNA + a D-alpha-amino acid + H(+). An aminoacyl-tRNA editing enzyme that deacylates mischarged D-aminoacyl-tRNAs. Also deacylates mischarged glycyl-tRNA(Ala), protecting cells against glycine mischarging by AlaRS. Acts via tRNA-based rather than protein-based catalysis; rejects L-amino acids rather than detecting D-amino acids in the active site. By recycling D-aminoacyl-tRNA to D-amino acids and free tRNA molecules, this enzyme counteracts the toxicity associated with the formation of D-aminoacyl-tRNA entities in vivo and helps enforce protein L-homochirality. This chain is D-aminoacyl-tRNA deacylase, found in Pelobacter propionicus (strain DSM 2379 / NBRC 103807 / OttBd1).